Consider the following 87-residue polypeptide: Small ribosomal subunit protein bS20 (87 aa).

The disordered stretch occupies residues 1–22; that stretch reads MANIKSQIKRIGTNKKAQERNK.

This sequence belongs to the bacterial ribosomal protein bS20 family.

Functionally, binds directly to 16S ribosomal RNA. This Clavibacter michiganensis subsp. michiganensis (strain NCPPB 382) protein is Small ribosomal subunit protein bS20.